The primary structure comprises 348 residues: Dual-specificity RNA methyltransferase RlmN (348 aa).

Residue Glu94 is the Proton acceptor of the active site. A Radical SAM core domain is found at Gly100–Arg330. A disulfide bridge connects residues Cys107 and Cys336. Residues Cys114, Cys118, and Cys121 each contribute to the [4Fe-4S] cluster site. S-adenosyl-L-methionine-binding positions include Gly163–Glu164, Ser195, Ser217–Asn219, and Asn293. Cys336 acts as the S-methylcysteine intermediate in catalysis.

It belongs to the radical SAM superfamily. RlmN family. The cofactor is [4Fe-4S] cluster.

The protein resides in the cytoplasm. The catalysed reaction is adenosine(2503) in 23S rRNA + 2 reduced [2Fe-2S]-[ferredoxin] + 2 S-adenosyl-L-methionine = 2-methyladenosine(2503) in 23S rRNA + 5'-deoxyadenosine + L-methionine + 2 oxidized [2Fe-2S]-[ferredoxin] + S-adenosyl-L-homocysteine. It catalyses the reaction adenosine(37) in tRNA + 2 reduced [2Fe-2S]-[ferredoxin] + 2 S-adenosyl-L-methionine = 2-methyladenosine(37) in tRNA + 5'-deoxyadenosine + L-methionine + 2 oxidized [2Fe-2S]-[ferredoxin] + S-adenosyl-L-homocysteine. Functionally, specifically methylates position 2 of adenine 2503 in 23S rRNA and position 2 of adenine 37 in tRNAs. m2A2503 modification seems to play a crucial role in the proofreading step occurring at the peptidyl transferase center and thus would serve to optimize ribosomal fidelity. The protein is Dual-specificity RNA methyltransferase RlmN of Syntrophus aciditrophicus (strain SB).